We begin with the raw amino-acid sequence, 338 residues long: Glycerol-3-phosphate dehydrogenase [NAD(P)+] (338 aa).

The NADPH site is built by serine 14, tyrosine 15, histidine 35, and lysine 109. Residues lysine 109, glycine 138, and threonine 140 each coordinate sn-glycerol 3-phosphate. Position 142 (alanine 142) interacts with NADPH. 5 residues coordinate sn-glycerol 3-phosphate: lysine 194, aspartate 247, serine 257, arginine 258, and asparagine 259. The Proton acceptor role is filled by lysine 194. NADPH is bound at residue arginine 258. NADPH is bound by residues valine 282 and glutamate 284.

This sequence belongs to the NAD-dependent glycerol-3-phosphate dehydrogenase family.

It localises to the cytoplasm. It carries out the reaction sn-glycerol 3-phosphate + NAD(+) = dihydroxyacetone phosphate + NADH + H(+). It catalyses the reaction sn-glycerol 3-phosphate + NADP(+) = dihydroxyacetone phosphate + NADPH + H(+). It functions in the pathway membrane lipid metabolism; glycerophospholipid metabolism. Functionally, catalyzes the reduction of the glycolytic intermediate dihydroxyacetone phosphate (DHAP) to sn-glycerol 3-phosphate (G3P), the key precursor for phospholipid synthesis. This chain is Glycerol-3-phosphate dehydrogenase [NAD(P)+], found in Shewanella sediminis (strain HAW-EB3).